A 631-amino-acid polypeptide reads, in one-letter code: Clathrin interactor 1 (631 aa).

Residues 24-157 (NVVMNYSEIE…QDDDRLREER (134 aa)) form the ENTH domain. Arginine 37 is an a 1,2-diacyl-sn-glycero-3-phospho-(1D-myo-inositol-4,5-bisphosphate) binding site. The interaction with VTI1B stretch occupies residues 60–62 (FMY). Arginine 75 contributes to the a 1,2-diacyl-sn-glycero-3-phospho-(1D-myo-inositol-4,5-bisphosphate) binding site. Interaction with VTI1B stretches follow at residues 102-104 (SER) and 150-161 (DDRLREERKKAK). A phosphoserine mark is found at serine 171, serine 174, serine 213, serine 218, serine 235, serine 253, and serine 307. The interval 227–339 (FRRKDREDSP…SSGDLVDLFD (113 aa)) is disordered. Residues 230 to 247 (KDREDSPERCSDSDEEKK) show a composition bias toward basic and acidic residues. Residues 308 to 318 (PDQNASTHTPQ) are compositionally biased toward polar residues. Threonine 316 is subject to Phosphothreonine. A compositionally biased stretch (low complexity) spans 319–331 (SSAKPSVPSSKSS). Phosphoserine is present on residues serine 320 and serine 630.

Belongs to the epsin family. Binds clathrin heavy chain and AP-2. Interacts with VTI1B. Interacts with GGA2 (via GAE domain). Interacts with AP1G1 (via GAE domain). Interacts with AP1G2 (via GAE domain).

It localises to the cytoplasm. It is found in the perinuclear region. The protein localises to the membrane. Its subcellular location is the cytoplasmic vesicle. The protein resides in the clathrin-coated vesicle. Binds to membranes enriched in phosphatidylinositol 4,5-bisphosphate (PtdIns(4,5)P2). May have a role in transport via clathrin-coated vesicles from the trans-Golgi network to endosomes. Stimulates clathrin assembly. This chain is Clathrin interactor 1 (Clint1), found in Mus musculus (Mouse).